Consider the following 94-residue polypeptide: MKITPKNILRHELIGLEACVVKSKNPSQVGICGLILDETYKTIVIGVPGGPKKRIFKAQVVLRIKLPDGKELLVDGAFLVGRPEERLKRRVMLW.

Belongs to the eukaryotic/archaeal RNase P protein component 1 family. Consists of a catalytic RNA component and at least 4-5 protein subunits.

Its subcellular location is the cytoplasm. The catalysed reaction is Endonucleolytic cleavage of RNA, removing 5'-extranucleotides from tRNA precursor.. Functionally, part of ribonuclease P, a protein complex that generates mature tRNA molecules by cleaving their 5'-ends. The protein is Ribonuclease P protein component 1 of Thermofilum pendens (strain DSM 2475 / Hrk 5).